The chain runs to 744 residues: CCR4-NOT transcription complex subunit 10 (744 aa).

Over residues 1-16 the composition is skewed to basic and acidic residues; that stretch reads MAADKPADQGAEKHEG. Residues 1 to 25 are disordered; it reads MAADKPADQGAEKHEGTGQSSGITD. Ala-2 carries the N-acetylalanine modification. The stretch at 74-107 forms a coiled coil; that stretch reads KSNQTTTDNLRQTLNQLKNQVHSAVEEMDGLDDV. The span at 183–199 shows a compositional bias: low complexity; sequence NNNKNGKNETGNNNNKD. 3 disordered regions span residues 183-204, 477-521, and 602-634; these read NNNKNGKNETGNNNNKDGSNHK, QDPK…PPSS, and VSLGISSNEQDQGSDKGENEAMESSGKRAPQCY. Over residues 484–495 the composition is skewed to polar residues; the sequence is GAKNSNQLGGNT. The segment covering 496-506 has biased composition (low complexity); that stretch reads ESSESSETCSS. Residues 602 to 612 are compositionally biased toward polar residues; it reads VSLGISSNEQD.

It belongs to the CNOT10 family. Component of the CCR4-NOT complex; distinct complexes seem to exist that differ in the participation of probably mutually exclusive catalytic subunits. CNOT10 and CNOT11 form a subcomplex docked to the CNOT1 scaffold.

It localises to the cytoplasm. The protein resides in the nucleus. Component of the CCR4-NOT complex which is one of the major cellular mRNA deadenylases and is linked to various cellular processes including bulk mRNA degradation, miRNA-mediated repression, translational repression during translational initiation and general transcription regulation. Additional complex functions may be a consequence of its influence on mRNA expression. Is not required for association of CNOT7 to the CCR4-NOT complex. This chain is CCR4-NOT transcription complex subunit 10 (CNOT10), found in Homo sapiens (Human).